The primary structure comprises 517 residues: Glutamate--tRNA ligase (517 aa).

Positions 10–20 match the 'HIGH' region motif; it reads PSPSGFLHVGG. 4 residues coordinate Zn(2+): cysteine 107, cysteine 109, cysteine 134, and aspartate 136. Residues 250 to 254 carry the 'KMSKS' region motif; sequence KLSKR. Position 253 (lysine 253) interacts with ATP.

The protein belongs to the class-I aminoacyl-tRNA synthetase family. Glutamate--tRNA ligase type 1 subfamily. Monomer. Zn(2+) is required as a cofactor.

The protein resides in the cytoplasm. It carries out the reaction tRNA(Glu) + L-glutamate + ATP = L-glutamyl-tRNA(Glu) + AMP + diphosphate. Functionally, catalyzes the attachment of glutamate to tRNA(Glu) in a two-step reaction: glutamate is first activated by ATP to form Glu-AMP and then transferred to the acceptor end of tRNA(Glu). The chain is Glutamate--tRNA ligase from Leptospira biflexa serovar Patoc (strain Patoc 1 / ATCC 23582 / Paris).